The sequence spans 207 residues: Large ribosomal subunit protein uL4 (207 aa).

It belongs to the universal ribosomal protein uL4 family. In terms of assembly, part of the 50S ribosomal subunit.

In terms of biological role, one of the primary rRNA binding proteins, this protein initially binds near the 5'-end of the 23S rRNA. It is important during the early stages of 50S assembly. It makes multiple contacts with different domains of the 23S rRNA in the assembled 50S subunit and ribosome. Functionally, forms part of the polypeptide exit tunnel. The polypeptide is Large ribosomal subunit protein uL4 (Rickettsia rickettsii (strain Iowa)).